The chain runs to 147 residues: Cytochrome c oxidase subunit 3 (147 aa).

The next 4 helical transmembrane spans lie at 13–33, 48–68, 83–103, and 125–145; these read FQIPLLNTIILISSGVSVTWA, GLFITIILGIYFTILQAYEYF, FFMATGFHGLHVIIGTLFLLI, and AWYWHFVDVVWLFLYISIYWW.

The protein belongs to the cytochrome c oxidase subunit 3 family. In terms of assembly, component of the cytochrome c oxidase (complex IV, CIV), a multisubunit enzyme composed of a catalytic core of 3 subunits and several supernumerary subunits. The complex exists as a monomer or a dimer and forms supercomplexes (SCs) in the inner mitochondrial membrane with ubiquinol-cytochrome c oxidoreductase (cytochrome b-c1 complex, complex III, CIII).

It localises to the mitochondrion inner membrane. The catalysed reaction is 4 Fe(II)-[cytochrome c] + O2 + 8 H(+)(in) = 4 Fe(III)-[cytochrome c] + 2 H2O + 4 H(+)(out). Functionally, component of the cytochrome c oxidase, the last enzyme in the mitochondrial electron transport chain which drives oxidative phosphorylation. The respiratory chain contains 3 multisubunit complexes succinate dehydrogenase (complex II, CII), ubiquinol-cytochrome c oxidoreductase (cytochrome b-c1 complex, complex III, CIII) and cytochrome c oxidase (complex IV, CIV), that cooperate to transfer electrons derived from NADH and succinate to molecular oxygen, creating an electrochemical gradient over the inner membrane that drives transmembrane transport and the ATP synthase. Cytochrome c oxidase is the component of the respiratory chain that catalyzes the reduction of oxygen to water. Electrons originating from reduced cytochrome c in the intermembrane space (IMS) are transferred via the dinuclear copper A center (CU(A)) of subunit 2 and heme A of subunit 1 to the active site in subunit 1, a binuclear center (BNC) formed by heme A3 and copper B (CU(B)). The BNC reduces molecular oxygen to 2 water molecules using 4 electrons from cytochrome c in the IMS and 4 protons from the mitochondrial matrix. The polypeptide is Cytochrome c oxidase subunit 3 (COIII) (Spodoptera frugiperda (Fall armyworm)).